A 132-amino-acid polypeptide reads, in one-letter code: Small ribosomal subunit protein uS19 (132 aa).

The protein belongs to the universal ribosomal protein uS19 family.

Functionally, protein S19 forms a complex with S13 that binds strongly to the 16S ribosomal RNA. The polypeptide is Small ribosomal subunit protein uS19 (rps19) (Pyrococcus abyssi (strain GE5 / Orsay)).